A 288-amino-acid chain; its full sequence is Fibroblast growth factor 2 (288 aa).

Positions 1-142 (MVGVGGGDVE…TMAAGSITTL (142 aa)) are excised as a propeptide. The tract at residues 1 to 156 (MVGVGGGDVE…EDGGSGAFPP (156 aa)) is disordered. Basic and acidic residues predominate over residues 72–84 (ERPSGSRLGDHGR). Omega-N-methylarginine; alternate is present on residues Arg-108, Arg-110, and Arg-112. Residues Arg-108, Arg-110, and Arg-112 each carry the symmetric dimethylarginine; alternate modification. Residues 113-132 (GTAAPRAAPAARGSRPGPAG) are compositionally biased toward low complexity. Asn-169 contributes to the heparin binding site. Residues 179–181 (DGR) carry the Cell attachment site; atypical motif. At Tyr-215 the chain carries Phosphotyrosine; by TEC. Residues 221–223 (DGR) carry the Cell attachment site; atypical motif. A Glycyl lysine isopeptide (Lys-Gly) (interchain with G-Cter in SUMO1) cross-link involves residue Lys-228. A heparin-binding region spans residues 261–277 (KRTGQYKLGSKTGPGQK).

This sequence belongs to the heparin-binding growth factors family. In terms of assembly, monomer. Homodimer. Interacts with FGFR1, FGFR2, FGFR3 and FGFR4. Affinity between fibroblast growth factors (FGFs) and their receptors is increased by heparan sulfate glycosaminoglycans that function as coreceptors. Interacts with CSPG4, FGFBP1 and TEC. Found in a complex with FGFBP1, FGF1 and FGF2. Interacts with FGFBP3. Interacts with integrin ITGAV:ITGB3; the interaction is required for FGF2 signaling. Interacts with SNORC (via the extracellular domain). Interacts with glypican GPC3. Phosphorylation at Tyr-215 regulates FGF2 unconventional secretion.

Its subcellular location is the secreted. The protein localises to the nucleus. In terms of biological role, acts as a ligand for FGFR1, FGFR2, FGFR3 and FGFR4. Also acts as an integrin ligand which is required for FGF2 signaling. Binds to integrin ITGAV:ITGB3. Plays an important role in the regulation of cell survival, cell division, cell differentiation and cell migration. Functions as a potent mitogen in vitro. Can induce angiogenesis. Mediates phosphorylation of ERK1/2 and thereby promotes retinal lens fiber differentiation. The protein is Fibroblast growth factor 2 of Pan troglodytes (Chimpanzee).